The primary structure comprises 1435 residues: Putative ATP-dependent RNA helicase YLR419W (1435 aa).

Disordered stretches follow at residues 1-57 and 226-251; these read MAKK…STAS and LSSH…KNSH. S9 is subject to Phosphoserine. Basic and acidic residues predominate over residues 31–43; the sequence is KGQEPEPEDDKRA. The span at 45–57 shows a compositional bias: polar residues; that stretch reads QQSNRAKVTSTAS. The 42-residue stretch at 365–406 folds into the UBA domain; that stretch reads PLSTRMIVERLTEIGVSSDEALLALQQNDMNENEAAGFLTRE. The RWD domain maps to 430–531; it reads QELESLESIY…EWLKENISKI (102 aa). The interval 543–566 is disordered; that stretch reads DSKGAINKRNISNGKRSINNSSSR. A compositionally biased stretch (polar residues) spans 551–566; sequence RNISNGKRSINNSSSR. One can recognise a Helicase ATP-binding domain in the interval 614–782; sequence IDIINKNEVV…FPGLATCHIE (169 aa). 627–634 contributes to the ATP binding site; it reads GETGSGKS. The DEAH box signature appears at 729 to 732; sequence DEVH. S816 bears the Phosphoserine mark. The 176-residue stretch at 845 to 1020 folds into the Helicase C-terminal domain; it reads LLCQVVEYVH…SLYLSVKAMG (176 aa).

The protein belongs to the DEAD box helicase family. DEAH subfamily.

The protein localises to the cytoplasm. The enzyme catalyses ATP + H2O = ADP + phosphate + H(+). Functionally, probable ATP-binding RNA helicase. The chain is Putative ATP-dependent RNA helicase YLR419W from Saccharomyces cerevisiae (strain ATCC 204508 / S288c) (Baker's yeast).